The sequence spans 430 residues: tRNA-2-methylthio-N(6)-dimethylallyladenosine synthase (430 aa).

One can recognise an MTTase N-terminal domain in the interval 2 to 111 (KKIHIKTYGC…IPQAVERAIN (110 aa)). 6 residues coordinate [4Fe-4S] cluster: cysteine 11, cysteine 47, cysteine 76, cysteine 147, cysteine 151, and cysteine 154. The region spanning 133 to 364 (RNSKHHAWIT…LNLQKEINKQ (232 aa)) is the Radical SAM core domain. The TRAM domain maps to 367-428 (ENYLNKTVEI…AGPLYGDIIK (62 aa)).

It belongs to the methylthiotransferase family. MiaB subfamily. Monomer. [4Fe-4S] cluster is required as a cofactor.

The protein resides in the cytoplasm. It catalyses the reaction N(6)-dimethylallyladenosine(37) in tRNA + (sulfur carrier)-SH + AH2 + 2 S-adenosyl-L-methionine = 2-methylsulfanyl-N(6)-dimethylallyladenosine(37) in tRNA + (sulfur carrier)-H + 5'-deoxyadenosine + L-methionine + A + S-adenosyl-L-homocysteine + 2 H(+). Functionally, catalyzes the methylthiolation of N6-(dimethylallyl)adenosine (i(6)A), leading to the formation of 2-methylthio-N6-(dimethylallyl)adenosine (ms(2)i(6)A) at position 37 in tRNAs that read codons beginning with uridine. The chain is tRNA-2-methylthio-N(6)-dimethylallyladenosine synthase from Thermosipho melanesiensis (strain DSM 12029 / CIP 104789 / BI429).